We begin with the raw amino-acid sequence, 283 residues long: 2-dehydro-3-deoxyphosphooctonate aldolase (283 aa).

It belongs to the KdsA family.

The protein localises to the cytoplasm. It catalyses the reaction D-arabinose 5-phosphate + phosphoenolpyruvate + H2O = 3-deoxy-alpha-D-manno-2-octulosonate-8-phosphate + phosphate. It functions in the pathway carbohydrate biosynthesis; 3-deoxy-D-manno-octulosonate biosynthesis; 3-deoxy-D-manno-octulosonate from D-ribulose 5-phosphate: step 2/3. It participates in bacterial outer membrane biogenesis; lipopolysaccharide biosynthesis. The polypeptide is 2-dehydro-3-deoxyphosphooctonate aldolase (Methylococcus capsulatus (strain ATCC 33009 / NCIMB 11132 / Bath)).